The chain runs to 627 residues: Chaperone protein HtpG (627 aa).

The interval 1–343 is a; substrate-binding; that stretch reads MATQEFQAET…SEDLSLNISR (343 aa). The segment at 344–553 is b; that stretch reads EMLQQDKQLK…EGEISIEMEK (210 aa). The c stretch occupies residues 554 to 627; that stretch reads VLQSMPNNQN…YTNNVCKIMS (74 aa).

Belongs to the heat shock protein 90 family. As to quaternary structure, homodimer.

It is found in the cytoplasm. Its function is as follows. Molecular chaperone. Has ATPase activity. This chain is Chaperone protein HtpG, found in Natranaerobius thermophilus (strain ATCC BAA-1301 / DSM 18059 / JW/NM-WN-LF).